The following is a 156-amino-acid chain: uncharacterized protein (156 aa).

In terms of domain architecture, N-acetyltransferase spans 11-156 (EEFRSYLTYT…ETDVVMSKKL (146 aa)).

This sequence belongs to the acetyltransferase family. Homodimer.

This is an uncharacterized protein from Bacillus subtilis (strain 168).